Consider the following 80-residue polypeptide: RNA-binding protein Hfq (80 aa).

Positions 10-69 (DPFLNLLRKEHVPVSIYLVNGIKLQGHIESFDQYVVLLRNTVTQMVYKHAISTVVPGRPV) constitute a Sm domain.

This sequence belongs to the Hfq family. As to quaternary structure, homohexamer.

Its function is as follows. RNA chaperone that binds small regulatory RNA (sRNAs) and mRNAs to facilitate mRNA translational regulation in response to envelope stress, environmental stress and changes in metabolite concentrations. Also binds with high specificity to tRNAs. The chain is RNA-binding protein Hfq from Leptothrix cholodnii (strain ATCC 51168 / LMG 8142 / SP-6) (Leptothrix discophora (strain SP-6)).